A 917-amino-acid polypeptide reads, in one-letter code: Major intrinsically disordered Notch2-binding receptor 1 (917 aa).

Over 1–892 (MEANQEASLF…AEFRRAKVCK (892 aa)) the chain is Cytoplasmic. Disordered regions lie at residues 337–367 (STYF…WPAK), 389–410 (SEEK…GPDR), 457–476 (DKSI…SVGT), 568–588 (ITNG…NVHH), 652–679 (SEAP…LENS), 706–727 (TRPS…IASI), and 746–783 (NEEE…LPKQ). The segment covering 460–476 (ISCTSGQHSSDTSSVGT) has biased composition (polar residues). Over residues 576–588 (KGDKCNRPENVHH) the composition is skewed to basic and acidic residues. Position 712 is a phosphoserine (Ser712). A helical transmembrane segment spans residues 893–913 (IAALITAAACTVILVIVVPIC). The Extracellular portion of the chain corresponds to 914-917 (TMKS).

The protein belongs to the MINAR family. Interacts with NOTCH2; this interaction increases MINAR1 stability. Interacts (via N-terminus) with DEPTOR (via PDZ domain); this interaction may stabilize DEPTOR protein by impairing its ubiquitination.

It is found in the cell membrane. Functionally, intrinsically disordered protein which may negatively regulate mTOR signaling pathway by stabilizing the mTOR complex component DEPTOR. Negatively regulates angiogenesis. Negatively regulates cell growth. Negatively regulates neurite outgrowth in hippocampal neurons. The sequence is that of Major intrinsically disordered Notch2-binding receptor 1 (Minar1) from Rattus norvegicus (Rat).